A 368-amino-acid chain; its full sequence is E3 ubiquitin-protein ligase ATL31 (368 aa).

Residues 1 to 23 (MDPIKHISLPVLVLFLLLSVSAG) form the signal peptide. Residues 46-66 (AVVVVVVIAALFFMGFFTVYI) traverse the membrane as a helical segment. The RING-type; atypical zinc finger occupies 124–166 (CAICLNEFEDDETLRLLPKCDHVFHPHCIGAWLQGHVTCPVCR). A Phosphoserine modification is found at Ser247. Residues 342-368 (NKDGEGTSSVQHIGTVGSTSGSLRLPV) are disordered. Residues 347–368 (GTSSVQHIGTVGSTSGSLRLPV) show a composition bias toward polar residues.

The protein belongs to the RING-type zinc finger family. ATL subfamily.

It is found in the membrane. The enzyme catalyses S-ubiquitinyl-[E2 ubiquitin-conjugating enzyme]-L-cysteine + [acceptor protein]-L-lysine = [E2 ubiquitin-conjugating enzyme]-L-cysteine + N(6)-ubiquitinyl-[acceptor protein]-L-lysine.. The protein operates within protein modification; protein ubiquitination. Functionally, E3 ubiquitin-protein ligase that is required for the plant C/N response during seedling growth transition. May be involved in the early steps of the plant defense signaling pathway. In Arabidopsis thaliana (Mouse-ear cress), this protein is E3 ubiquitin-protein ligase ATL31 (ATL31).